A 274-amino-acid polypeptide reads, in one-letter code: Formamidopyrimidine-DNA glycosylase (274 aa).

The active-site Schiff-base intermediate with DNA is proline 2. Glutamate 3 acts as the Proton donor in catalysis. Lysine 56 serves as the catalytic Proton donor; for beta-elimination activity. Positions 89, 107, and 148 each coordinate DNA. The segment at 233-267 (LAYGRAREMCVNCETTLENLKLGQRASVFCPQCQP) adopts an FPG-type zinc-finger fold. Arginine 257 functions as the Proton donor; for delta-elimination activity in the catalytic mechanism.

The protein belongs to the FPG family. In terms of assembly, monomer. Zn(2+) is required as a cofactor.

The enzyme catalyses Hydrolysis of DNA containing ring-opened 7-methylguanine residues, releasing 2,6-diamino-4-hydroxy-5-(N-methyl)formamidopyrimidine.. It carries out the reaction 2'-deoxyribonucleotide-(2'-deoxyribose 5'-phosphate)-2'-deoxyribonucleotide-DNA = a 3'-end 2'-deoxyribonucleotide-(2,3-dehydro-2,3-deoxyribose 5'-phosphate)-DNA + a 5'-end 5'-phospho-2'-deoxyribonucleoside-DNA + H(+). In terms of biological role, involved in base excision repair of DNA damaged by oxidation or by mutagenic agents. Acts as a DNA glycosylase that recognizes and removes damaged bases. Has a preference for oxidized purines, such as 7,8-dihydro-8-oxoguanine (8-oxoG). Has AP (apurinic/apyrimidinic) lyase activity and introduces nicks in the DNA strand. Cleaves the DNA backbone by beta-delta elimination to generate a single-strand break at the site of the removed base with both 3'- and 5'-phosphates. This Acinetobacter baumannii (strain SDF) protein is Formamidopyrimidine-DNA glycosylase.